Consider the following 88-residue polypeptide: Alpha-latrotoxin associated low molecular weight protein (88 aa).

The first 18 residues, 1–18 (MSKLFFVAFLCLIISVFA), serve as a signal peptide directing secretion.

This sequence belongs to the arthropod CHH/MIH/GIH/VIH hormone family. As to expression, expressed by the venom gland.

It is found in the secreted. May increase the toxicity of alpha-latrotoxin and/or other venom components. Is non-toxic to mice and to the cockroach Periplaneta americana. In Latrodectus hesperus (Western black widow spider), this protein is Alpha-latrotoxin associated low molecular weight protein.